Reading from the N-terminus, the 446-residue chain is Methanogenesis regulatory protein FilR1 (446 aa).

The region spanning 297–416 is the Response regulatory domain; it reads DVMIVEDDLG…QRLPEIAEEA (120 aa). At Asp-350 the chain carries 4-aspartylphosphate.

Phosphorylated by FilI.

Functionally, member of the two-component regulatory system FilI/FilRs, which is involved in the regulation of methanogenesis. Regulates its own expression, expression of the filI-filR2 operon, and of genes involved in methanogenesis such as acs1, acs4 and mtrABC. Acts by binding to the promoters. The chain is Methanogenesis regulatory protein FilR1 from Methanothrix harundinacea (strain 6Ac) (Methanosaeta harundinacea).